The chain runs to 184 residues: MINDIKKDGEDRMKKTLEVLENAFSKVRTGRAHPGMLSGVMVSYYGADTPLNQVASVNVEDSRTLLVQPFERSMVQAVDKAIREADLGLNPMTADVIRVPMPALTEETRRDMQKLARGEAENSRVSIRNVRRDMLNDIKELAKEKEISEDDERRASDDIQKITDKYIASIDSKLEAKEKELMEV.

Belongs to the RRF family.

The protein localises to the cytoplasm. In terms of biological role, responsible for the release of ribosomes from messenger RNA at the termination of protein biosynthesis. May increase the efficiency of translation by recycling ribosomes from one round of translation to another. In Psychrobacter sp. (strain PRwf-1), this protein is Ribosome-recycling factor.